A 343-amino-acid chain; its full sequence is Protein RecA (343 aa).

Residue 66–73 (GPESSGKT) coordinates ATP. The interval 319–343 (IERQIREKHLPKRSAKADEAESAEA) is disordered.

Belongs to the RecA family.

The protein resides in the cytoplasm. Its function is as follows. Can catalyze the hydrolysis of ATP in the presence of single-stranded DNA, the ATP-dependent uptake of single-stranded DNA by duplex DNA, and the ATP-dependent hybridization of homologous single-stranded DNAs. It interacts with LexA causing its activation and leading to its autocatalytic cleavage. This is Protein RecA from Thioalkalivibrio sulfidiphilus (strain HL-EbGR7).